Here is a 107-residue protein sequence, read N- to C-terminus: High mobility group protein HMG-I/HMG-Y (107 aa).

The segment at Met1 to Gln107 is disordered. Residue Ser2 is modified to N-acetylserine. N6-acetyllysine is present on Lys7. Ser8 carries the post-translational modification ADP-ribosylserine. Ser9 carries the ADP-ribosylserine; alternate modification. Ser9 is modified (phosphoserine; alternate). Lys15 bears the N6-acetyllysine; alternate mark. Lys15 participates in a covalent cross-link: Glycyl lysine isopeptide (Lys-Gly) (interchain with G-Cter in SUMO2); alternate. The segment covering Lys15–Arg24 has biased composition (basic and acidic residues). A DNA-binding region (a.T hook 1) is located at residues Thr21–Lys31. Asymmetric dimethylarginine; alternate is present on Arg26. Arg26 carries the omega-N-methylarginine; alternate modification. Residue Arg26 is modified to Symmetric dimethylarginine; alternate. Phosphoserine; by HIPK2 and CDC2 is present on Ser36. Thr39 carries the phosphothreonine modification. A phosphoserine mark is found at Ser44 and Ser49. Thr53 carries the post-translational modification Phosphothreonine; by HIPK2 and CDC2. DNA-binding regions (a.T hook) lie at residues Thr53–Gly63 and Ala78–Lys89. An interaction with HIPK2 region spans residues Thr53–Thr77. A compositionally biased stretch (basic residues) spans Lys55–Lys74. Residues Arg58 and Arg60 each carry the asymmetric dimethylarginine; by PRMT6; alternate modification. Omega-N-methylarginine; by PRMT6; alternate occurs at positions 58 and 60. The segment covering Glu93–Gln107 has biased composition (acidic residues). Phosphoserine is present on residues Ser99, Ser102, and Ser103.

This sequence belongs to the HMGA family. As to quaternary structure, interacts with HIPK2. Isoforms HMG-I and HMG-Y can be phosphorylated by HIPK2. Phosphorylation may modulate DNA-binding affinity. In terms of processing, methylation at Arg-58 is mutually exclusive with methylation at Arg-60.

It localises to the nucleus. Its subcellular location is the chromosome. In terms of biological role, HMG-I/Y bind preferentially to the minor groove of A+T rich regions in double-stranded DNA. It is suggested that these proteins could function in nucleosome phasing and in the 3'-end processing of mRNA transcripts. They are also involved in the transcription regulation of genes containing, or in close proximity to A+T-rich regions. This Cricetulus griseus (Chinese hamster) protein is High mobility group protein HMG-I/HMG-Y (HMGA1).